Reading from the N-terminus, the 87-residue chain is MVKNSVISIIFQEEKRGSVEFQVFNFTNKIRRLTSHLELHKKDYLSQRGLKKILGKRQRLLAYLAKKNRVRYKELINQLDIRETKTR.

Belongs to the universal ribosomal protein uS15 family. Part of the 30S ribosomal subunit.

Its subcellular location is the plastid. It is found in the chloroplast. The chain is Small ribosomal subunit protein uS15c (rps15) from Atropa belladonna (Belladonna).